Here is a 401-residue protein sequence, read N- to C-terminus: 1-deoxy-D-xylulose 5-phosphate reductoisomerase (401 aa).

Residues threonine 11, glycine 12, serine 13, isoleucine 14, arginine 38, asparagine 39, and asparagine 125 each contribute to the NADPH site. Lysine 126 serves as a coordination point for 1-deoxy-D-xylulose 5-phosphate. Glutamate 127 serves as a coordination point for NADPH. Residue aspartate 151 participates in Mn(2+) binding. Positions 152, 153, 179, and 202 each coordinate 1-deoxy-D-xylulose 5-phosphate. Residue glutamate 153 coordinates Mn(2+). Glycine 208 lines the NADPH pocket. 1-deoxy-D-xylulose 5-phosphate is bound by residues serine 215, asparagine 220, lysine 221, and glutamate 224. Glutamate 224 contributes to the Mn(2+) binding site.

The protein belongs to the DXR family. Mg(2+) serves as cofactor. It depends on Mn(2+) as a cofactor.

The enzyme catalyses 2-C-methyl-D-erythritol 4-phosphate + NADP(+) = 1-deoxy-D-xylulose 5-phosphate + NADPH + H(+). It participates in isoprenoid biosynthesis; isopentenyl diphosphate biosynthesis via DXP pathway; isopentenyl diphosphate from 1-deoxy-D-xylulose 5-phosphate: step 1/6. In terms of biological role, catalyzes the NADPH-dependent rearrangement and reduction of 1-deoxy-D-xylulose-5-phosphate (DXP) to 2-C-methyl-D-erythritol 4-phosphate (MEP). This is 1-deoxy-D-xylulose 5-phosphate reductoisomerase from Paraburkholderia phymatum (strain DSM 17167 / CIP 108236 / LMG 21445 / STM815) (Burkholderia phymatum).